A 265-amino-acid polypeptide reads, in one-letter code: Putative cysteine-rich receptor-like protein kinase At4g11521 (265 aa).

An N-terminal signal peptide occupies residues 1–23 (MMLNTLFLPIFLFFLITFDYVST). 2 consecutive Gnk2-homologous domains span residues 24 to 122 (QTCF…NISF) and 128 to 241 (MEPS…LYPF). N-linked (GlcNAc...) asparagine glycans are attached at residues N34, N102, and N119. Residue N247 is glycosylated (N-linked (GlcNAc...) asparagine).

This sequence belongs to the protein kinase superfamily. Ser/Thr protein kinase family. CRK subfamily.

It localises to the secreted. The sequence is that of Putative cysteine-rich receptor-like protein kinase At4g11521 from Arabidopsis thaliana (Mouse-ear cress).